Here is a 340-residue protein sequence, read N- to C-terminus: Ketol-acid reductoisomerase (NADP(+)) (340 aa).

Residues 1-183 (MAITVYYDKD…GGGRTGIIET (183 aa)) enclose the KARI N-terminal Rossmann domain. NADP(+) contacts are provided by residues 26–29 (FGSQ), S54, and 84–87 (DEFQ). H109 is a catalytic residue. Position 135 (G135) interacts with NADP(+). In terms of domain architecture, KARI C-terminal knotted spans 184–329 (TFKAETETDL…EKLRGMMPWI (146 aa)). Positions 192, 196, 228, and 232 each coordinate Mg(2+). S253 is a substrate binding site.

The protein belongs to the ketol-acid reductoisomerase family. The cofactor is Mg(2+).

The catalysed reaction is (2R)-2,3-dihydroxy-3-methylbutanoate + NADP(+) = (2S)-2-acetolactate + NADPH + H(+). The enzyme catalyses (2R,3R)-2,3-dihydroxy-3-methylpentanoate + NADP(+) = (S)-2-ethyl-2-hydroxy-3-oxobutanoate + NADPH + H(+). The protein operates within amino-acid biosynthesis; L-isoleucine biosynthesis; L-isoleucine from 2-oxobutanoate: step 2/4. It functions in the pathway amino-acid biosynthesis; L-valine biosynthesis; L-valine from pyruvate: step 2/4. In terms of biological role, involved in the biosynthesis of branched-chain amino acids (BCAA). Catalyzes an alkyl-migration followed by a ketol-acid reduction of (S)-2-acetolactate (S2AL) to yield (R)-2,3-dihydroxy-isovalerate. In the isomerase reaction, S2AL is rearranged via a Mg-dependent methyl migration to produce 3-hydroxy-3-methyl-2-ketobutyrate (HMKB). In the reductase reaction, this 2-ketoacid undergoes a metal-dependent reduction by NADPH to yield (R)-2,3-dihydroxy-isovalerate. This chain is Ketol-acid reductoisomerase (NADP(+)), found in Campylobacter fetus subsp. fetus (strain 82-40).